Here is a 253-residue protein sequence, read N- to C-terminus: Uroplakin-3b-like protein 1 (253 aa).

Positions 1 to 26 are cleaved as a signal peptide; it reads MGLGRGQSPLLMALLLLLACLQMGMS. Residues 27–194 lie on the Extracellular side of the membrane; it reads LERISYVPQL…PGPQTAGTVV (168 aa). N-linked (GlcNAc...) asparagine glycosylation is found at Asn-78 and Asn-130. The helical transmembrane segment at 195–215 threads the bilayer; sequence IIAILSVLLAVLLAALLALLI. Over 216–253 the chain is Cytoplasmic; it reads FTWYDTCGSTPISGPGELVFVRKYDTHHMSRPSTVGGS.

The protein belongs to the uroplakin-3 family.

The protein resides in the membrane. The polypeptide is Uroplakin-3b-like protein 1 (Bos taurus (Bovine)).